Here is a 90-residue protein sequence, read N- to C-terminus: DTHKSEIAHRFNDLGRHPEYAVSVLLRHLVDEPQNLIKKHGEYGFQNALIVRXXXKAPQVSTPTLVEISRKQTALVELLKLVASTQAALA.

Serine 5 is subject to Phosphoserine. The Ca(2+) site is built by glutamate 6 and aspartate 13. One can recognise an Albumin domain in the interval 25-90 (LLRHLVDEPQ…LVASTQAALA (66 aa)). Serine 61 carries the post-translational modification Phosphoserine. Phosphothreonine occurs at positions 62 and 64. The residue at position 80 (lysine 80) is an N6-methyllysine.

This sequence belongs to the ALB/AFP/VDB family. Interacts with FCGRT; this interaction regulates ALB homeostasis. Interacts with TASOR. In plasma, occurs in a covalently-linked complex with chromophore-bound alpha-1-microglobulin; this interaction does not prevent fatty acid binding to ALB. As to expression, plasma.

It is found in the secreted. Binds water, Ca(2+), Na(+), K(+), fatty acids, hormones, bilirubin and drugs. Its main function is the regulation of the colloidal osmotic pressure of blood. Major zinc transporter in plasma, typically binds about 80% of all plasma zinc. Major calcium and magnesium transporter in plasma, binds approximately 45% of circulating calcium and magnesium in plasma. Potentially has more than two calcium-binding sites and might additionally bind calcium in a non-specific manner. The shared binding site between zinc and calcium suggests a crosstalk between zinc and calcium transport in the blood. The rank order of affinity is zinc &gt; calcium &gt; magnesium. Binds to the bacterial siderophore enterobactin and inhibits enterobactin-mediated iron uptake of E.coli from ferric transferrin, and may thereby limit the utilization of iron and growth of enteric bacteria such as E.coli. Does not prevent iron uptake by the bacterial siderophore aerobactin. This chain is Albumin, found in Capra hircus (Goat).